Here is a 324-residue protein sequence, read N- to C-terminus: 4-hydroxyphenylpyruvate 3-dimethylallyltransferase (324 aa).

Substrate is bound by residues R160 and E281.

It belongs to the aromatic prenyltransferase family. In terms of assembly, monomer.

It carries out the reaction 3-(4-hydroxyphenyl)pyruvate + dimethylallyl diphosphate = 3-dimethylallyl-4-hydroxyphenylpyruvate + diphosphate. It functions in the pathway antibiotic biosynthesis. Its function is as follows. Magnesium-independent aromatic prenyltransferase that catalyzes the irreversible transfer of a dimethylallyl group to 4-hydroxyphenylpyruvate to produce the ring A structure in the clorobiocin biosynthesis pathway. Clorobiocin is an aminocoumarin family antibiotic. The polypeptide is 4-hydroxyphenylpyruvate 3-dimethylallyltransferase (Streptomyces roseochromogenus subsp. oscitans).